A 70-amino-acid chain; its full sequence is Cytochrome c oxidase subunit 8B, mitochondrial (70 aa).

The N-terminal 24 residues, 1–24 (MLRLAPTVRLLQAPLRGWAVPKAH), are a transit peptide targeting the mitochondrion. Residues 25–35 (ITAKPAKTPTS) lie on the Mitochondrial matrix side of the membrane. A helical transmembrane segment spans residues 36–59 (PKEQAIGLSVTFLSFLLPAGWVLY). Topologically, residues 60–70 (HLDNYKKSSAA) are mitochondrial intermembrane.

Belongs to the cytochrome c oxidase VIII family. In terms of assembly, component of the cytochrome c oxidase (complex IV, CIV), a multisubunit enzyme composed of 14 subunits. The complex is composed of a catalytic core of 3 subunits MT-CO1, MT-CO2 and MT-CO3, encoded in the mitochondrial DNA, and 11 supernumerary subunits COX4I1 (or COX4I2), COX5A, COX5B, COX6A2 (or COX6A1), COX6B1 (or COX6B2), COX6C, COX7A1 (or COX7A2), COX7B, COX7C, COX8B and NDUFA4, which are encoded in the nuclear genome. The complex exists as a monomer or a dimer and forms supercomplexes (SCs) in the inner mitochondrial membrane with NADH-ubiquinone oxidoreductase (complex I, CI) and ubiquinol-cytochrome c oxidoreductase (cytochrome b-c1 complex, complex III, CIII), resulting in different assemblies (supercomplex SCI(1)III(2)IV(1) and megacomplex MCI(2)III(2)IV(2)).

The protein localises to the mitochondrion inner membrane. Its pathway is energy metabolism; oxidative phosphorylation. Functionally, component of the cytochrome c oxidase, the last enzyme in the mitochondrial electron transport chain which drives oxidative phosphorylation. The respiratory chain contains 3 multisubunit complexes succinate dehydrogenase (complex II, CII), ubiquinol-cytochrome c oxidoreductase (cytochrome b-c1 complex, complex III, CIII) and cytochrome c oxidase (complex IV, CIV), that cooperate to transfer electrons derived from NADH and succinate to molecular oxygen, creating an electrochemical gradient over the inner membrane that drives transmembrane transport and the ATP synthase. Cytochrome c oxidase is the component of the respiratory chain that catalyzes the reduction of oxygen to water. Electrons originating from reduced cytochrome c in the intermembrane space (IMS) are transferred via the dinuclear copper A center (CU(A)) of subunit 2 and heme A of subunit 1 to the active site in subunit 1, a binuclear center (BNC) formed by heme A3 and copper B (CU(B)). The BNC reduces molecular oxygen to 2 water molecules using 4 electrons from cytochrome c in the IMS and 4 protons from the mitochondrial matrix. The protein is Cytochrome c oxidase subunit 8B, mitochondrial (COX8B) of Bos taurus (Bovine).